The primary structure comprises 124 residues: Small ribosomal subunit protein uS12c (124 aa).

Positions 105-124 (AGVKDRRQSRSKYGAKRPKA) are disordered. Residues 113-124 (SRSKYGAKRPKA) are compositionally biased toward basic residues.

The protein belongs to the universal ribosomal protein uS12 family. Part of the 30S ribosomal subunit.

It is found in the plastid. The protein resides in the cyanelle. With S4 and S5 plays an important role in translational accuracy. Located at the interface of the 30S and 50S subunits. In Cyanophora paradoxa, this protein is Small ribosomal subunit protein uS12c (rps12).